The chain runs to 713 residues: Low-density lipoprotein receptor-related protein 10 (713 aa).

The first 17 residues, 1–17 (MLSALPLLFLLLGGALA), serve as a signal peptide directing secretion. Over 18–441 (RPDRITFPRS…WDCSYALPRK (424 aa)) the chain is Extracellular. Intrachain disulfides connect Cys29–Cys58 and Cys81–Cys99. Residues 29–137 (CEAPPAVLSE…QGFLLTYSQD (109 aa)) form the CUB 1 domain. Asn57 is a glycosylation site (N-linked (GlcNAc...) asparagine). N-linked (GlcNAc...) asparagine glycosylation is present at Asn112. Residues 140 to 176 (LCLQEEFQCLNHRCIPAAQRCDGIDACGDGSDEAGCS) enclose the LDL-receptor class A 1 domain. 4 disulfide bridges follow: Cys141–Cys153, Cys148–Cys166, Cys160–Cys175, and Cys193–Cys221. One can recognise a CUB 2 domain in the interval 193–306 (CNLTLEDFYG…RGFNATYHVR (114 aa)). Asn194 and Asn300 each carry an N-linked (GlcNAc...) asparagine glycan. 3 consecutive LDL-receptor class A domains span residues 308 to 355 (YCLP…EGCP), 356 to 398 (GCPP…RRCR), and 399 to 435 (HCQP…WDCS). Disulfide bonds link Cys309-Cys332, Cys316-Cys345, Cys339-Cys354, Cys357-Cys375, Cys364-Cys388, Cys382-Cys397, Cys400-Cys412, Cys407-Cys425, and Cys419-Cys434. The helical transmembrane segment at 442-462 (VITAAVIGSLVCGLLLVIALG) threads the bilayer. Residues 463–713 (CTCKLYAIRT…VEAEDEPLLA (251 aa)) are Cytoplasmic-facing. A disordered region spans residues 566 to 636 (LLPRTNTPAR…TLPALATVSE (71 aa)). Thr596 is subject to Phosphothreonine. Residues 614–626 (PPLPIKTPIPTPS) are compositionally biased toward pro residues.

The protein belongs to the LDLR family. As to expression, highly expressed in heart, lung, liver and liver. Expressed at low level in brain and spleen. Weakly or not expressed in testis and skeletal muscle. In liver, it is expressed in hepatocytes and at higher level in sinusoidal lining. In the kidney, it is expressed in peritubular capillaries. In brain, it is expressed in the epithelium of the choroid plexus ependymal cells of the third ventricle pia matter, and to lesser extent in hippocampal fields CA2 and CA3.

The protein resides in the membrane. It is found in the coated pit. Probable receptor, which is involved in the internalization of lipophilic molecules and/or signal transduction. May be involved in the uptake of lipoprotein APOE in liver. The polypeptide is Low-density lipoprotein receptor-related protein 10 (Lrp10) (Mus musculus (Mouse)).